Here is a 328-residue protein sequence, read N- to C-terminus: Ornithine transcarbamylase, mitochondrial (328 aa).

A mitochondrion-targeting transit peptide spans Gly-1 to Gln-6. The residue at position 44 (Lys-44) is an N6-acetyllysine; alternate. Lys-44 bears the N6-succinyllysine; alternate mark. Lys-54 carries the N6-succinyllysine modification. Lys-62 carries the N6-acetyllysine; alternate modification. Lys-62 carries the post-translational modification N6-succinyllysine; alternate. Ser-64–Arg-68 contributes to the carbamoyl phosphate binding site. Phosphoserine is present on Ser-107. Arg-115 contributes to the carbamoyl phosphate binding site. Arg-115 is an L-ornithine binding site. An N6-acetyllysine; alternate modification is found at Lys-118. The residue at position 118 (Lys-118) is an N6-succinyllysine; alternate. His-142 contributes to the carbamoyl phosphate binding site. An L-ornithine-binding site is contributed by Asn-173. Lys-195, Lys-205, and Lys-212 each carry N6-acetyllysine; alternate. N6-succinyllysine; alternate occurs at positions 195, 205, and 212. An L-ornithine-binding site is contributed by Asp-237–Ser-241. Residues Lys-248 and Lys-263 each carry the N6-succinyllysine modification. L-ornithine is bound at residue His-276 to Pro-279. Residue Cys-277 is part of the active site. Position 281 is an N6-acetyllysine; alternate (Lys-281). Position 281 is an N6-succinyllysine; alternate (Lys-281). Arg-304 contacts carbamoyl phosphate. An L-ornithine-binding site is contributed by Arg-304.

Belongs to the aspartate/ornithine carbamoyltransferase superfamily. OTCase family. In terms of assembly, homotrimer. Post-translationally, acetylation at Lys-62 negatively regulates ornithine carbamoyltransferase activity in response to nutrient signals.

It localises to the mitochondrion matrix. The catalysed reaction is carbamoyl phosphate + L-ornithine = L-citrulline + phosphate + H(+). It functions in the pathway nitrogen metabolism; urea cycle; L-citrulline from L-ornithine and carbamoyl phosphate: step 1/1. Negatively regulated by lysine acetylation. Catalyzes the second step of the urea cycle, the condensation of carbamoyl phosphate with L-ornithine to form L-citrulline. The urea cycle ensures the detoxification of ammonia by converting it to urea for excretion. This is Ornithine transcarbamylase, mitochondrial from Sus scrofa (Pig).